The sequence spans 177 residues: Adenine phosphoribosyltransferase (177 aa).

This sequence belongs to the purine/pyrimidine phosphoribosyltransferase family. Homodimer.

It localises to the cytoplasm. The enzyme catalyses AMP + diphosphate = 5-phospho-alpha-D-ribose 1-diphosphate + adenine. It functions in the pathway purine metabolism; AMP biosynthesis via salvage pathway; AMP from adenine: step 1/1. In terms of biological role, catalyzes a salvage reaction resulting in the formation of AMP, that is energically less costly than de novo synthesis. This is Adenine phosphoribosyltransferase from Synechococcus sp. (strain RCC307).